We begin with the raw amino-acid sequence, 157 residues long: uncharacterized protein (157 aa).

The first 28 residues, Met-1–Ala-28, serve as a signal peptide directing secretion.

This is an uncharacterized protein from Bacillus subtilis (strain 168).